The primary structure comprises 355 residues: Protein MGF 360-3L (355 aa).

The ANK repeat unit spans residues Lys60–Leu92.

This sequence belongs to the asfivirus MGF 360 family.

Its function is as follows. Plays a role in virus cell tropism, and may be required for efficient virus replication in macrophages. In Ornithodoros (relapsing fever ticks), this protein is Protein MGF 360-3L.